The sequence spans 237 residues: Ribosomal RNA small subunit methyltransferase G (237 aa).

S-adenosyl-L-methionine contacts are provided by residues Gly78, Phe83, 129 to 130 (AE), and Arg148. Residues 218–237 (KKETPNKFPRKAGMPNKRPL) are disordered.

Belongs to the methyltransferase superfamily. RNA methyltransferase RsmG family.

It localises to the cytoplasm. Its function is as follows. Specifically methylates the N7 position of a guanine in 16S rRNA. The protein is Ribosomal RNA small subunit methyltransferase G of Streptococcus suis (strain 98HAH33).